The chain runs to 102 residues: Omega-hexatoxin-Hi2a (102 aa).

The signal sequence occupies residues 1–23 (MKFSKLSLTLALILTQALLVVCG). Residues 24–56 (KINEDFMENGLESHALHDEIRKPIDTEKADAER) constitute a propeptide that is removed on maturation. Cystine bridges form between cysteine 61–cysteine 75, cysteine 68–cysteine 81, and cysteine 74–cysteine 86. At leucine 98 the chain carries Leucine amide. Positions 100–102 (RAL) are excised as a propeptide.

Belongs to the neurotoxin 15 family. 02 (omega-actx) subfamily. As to expression, expressed by the venom gland.

Its subcellular location is the secreted. Potent inhibitor of insect, but not mammalian, voltage-gated calcium channels (Cav). This is Omega-hexatoxin-Hi2a from Hadronyche infensa (Fraser island funnel-web spider).